The sequence spans 296 residues: Lipoyl synthase (296 aa).

Residues C37, C42, C48, C63, C67, C70, and S276 each coordinate [4Fe-4S] cluster. One can recognise a Radical SAM core domain in the interval 49–265; it reads WSKKHTTVMI…ERVAKTKGFL (217 aa).

Belongs to the radical SAM superfamily. Lipoyl synthase family. Requires [4Fe-4S] cluster as cofactor.

It is found in the cytoplasm. It carries out the reaction [[Fe-S] cluster scaffold protein carrying a second [4Fe-4S](2+) cluster] + N(6)-octanoyl-L-lysyl-[protein] + 2 oxidized [2Fe-2S]-[ferredoxin] + 2 S-adenosyl-L-methionine + 4 H(+) = [[Fe-S] cluster scaffold protein] + N(6)-[(R)-dihydrolipoyl]-L-lysyl-[protein] + 4 Fe(3+) + 2 hydrogen sulfide + 2 5'-deoxyadenosine + 2 L-methionine + 2 reduced [2Fe-2S]-[ferredoxin]. Its pathway is protein modification; protein lipoylation via endogenous pathway; protein N(6)-(lipoyl)lysine from octanoyl-[acyl-carrier-protein]: step 2/2. Catalyzes the radical-mediated insertion of two sulfur atoms into the C-6 and C-8 positions of the octanoyl moiety bound to the lipoyl domains of lipoate-dependent enzymes, thereby converting the octanoylated domains into lipoylated derivatives. The sequence is that of Lipoyl synthase from Rickettsia massiliae (strain Mtu5).